Here is a 189-residue protein sequence, read N- to C-terminus: GTP cyclohydrolase 1 (189 aa).

C80, H83, and C152 together coordinate Zn(2+).

The protein belongs to the GTP cyclohydrolase I family. As to quaternary structure, toroid-shaped homodecamer, composed of two pentamers of five dimers.

The enzyme catalyses GTP + H2O = 7,8-dihydroneopterin 3'-triphosphate + formate + H(+). Its pathway is cofactor biosynthesis; 7,8-dihydroneopterin triphosphate biosynthesis; 7,8-dihydroneopterin triphosphate from GTP: step 1/1. This chain is GTP cyclohydrolase 1, found in Latilactobacillus sakei subsp. sakei (strain 23K) (Lactobacillus sakei subsp. sakei).